A 197-amino-acid polypeptide reads, in one-letter code: Guanylate kinase (197 aa).

Residues 6-191 form the Guanylate kinase-like domain; sequence SKLIILSGPS…CVAQIEKIIS (186 aa). Residue 13-20 participates in ATP binding; that stretch reads GPSGVGKG.

Belongs to the guanylate kinase family.

Its subcellular location is the cytoplasm. The enzyme catalyses GMP + ATP = GDP + ADP. Essential for recycling GMP and indirectly, cGMP. This Mesomycoplasma hyopneumoniae (strain 232) (Mycoplasma hyopneumoniae) protein is Guanylate kinase.